Here is a 346-residue protein sequence, read N- to C-terminus: Annexin A1 (346 aa).

An N-acetylalanine modification is found at Ala2. Phosphoserine; by TRPM7 is present on Ser5. Residue Gln19 forms an Isoglutamyl lysine isopeptide (Gln-Lys) (interchain with K-?) linkage. Tyr21 is modified (phosphotyrosine; by EGFR). A Phosphoserine; by PKC modification is found at Ser27. Residues Ser34 and Ser37 each carry the phosphoserine modification. 4 Annexin repeats span residues Phe42–Lys113, Thr114–Lys185, Asp197–Lys269, and Ser273–Gly344. The residue at position 58 (Lys58) is an N6-acetyllysine. Residues Gly59, Val60, Glu62, Lys97, Leu100, Glu105, Met127, Gly129, Gly131, Thr132, and Glu134 each contribute to the Ca(2+) site. A Phosphothreonine modification is found at Thr136. Positions 171, 210, and 213 each coordinate Ca(2+). Lys214 participates in a covalent cross-link: Glycyl lysine isopeptide (Lys-Gly) (interchain with G-Cter in SUMO1); alternate. A Glycyl lysine isopeptide (Lys-Gly) (interchain with G-Cter in SUMO2); alternate cross-link involves residue Lys214. Residues Gly215, Asp253, Glu255, and Leu256 each contribute to the Ca(2+) site. Lys257 is covalently cross-linked (Glycyl lysine isopeptide (Lys-Gly) (interchain with G-Cter in SUMO1)). Glu261, Met286, Gly288, and Gly290 together coordinate Ca(2+). An N6-acetyllysine modification is found at Lys312. A disulfide bond links Cys324 and Cys343. Ca(2+) contacts are provided by Leu328, Glu330, and Thr331. Lys332 is covalently cross-linked (Glycyl lysine isopeptide (Lys-Gly) (interchain with G-Cter in SUMO1)). Ca(2+) is bound at residue Glu336.

The protein belongs to the annexin family. In terms of assembly, homodimer; non-covalently linked. Homodimer; linked by transglutamylation. Homodimers linked by transglutamylation are observed in placenta, but not in other tissues. Interacts with S100A11. Heterotetramer, formed by two molecules each of S100A11 and ANXA1. Interacts with DYSF. Interacts with EGFR. Post-translationally, phosphorylated by protein kinase C, EGFR and TRPM7. Phosphorylated in response to EGF treatment. Sumoylated. In terms of processing, proteolytically cleaved by cathepsin CTSG to release the active N-terminal peptide Ac2-26. As to expression, detected in eosinophils. Detected in lung, placenta, spleen and thymus (at protein level).

The protein localises to the nucleus. Its subcellular location is the cytoplasm. It is found in the cell projection. It localises to the cilium. The protein resides in the basolateral cell membrane. The protein localises to the lateral cell membrane. Its subcellular location is the cell membrane. It is found in the apical cell membrane. It localises to the membrane. The protein resides in the endosome membrane. The protein localises to the secreted. Its subcellular location is the extracellular space. It is found in the early endosome. It localises to the cytoplasmic vesicle membrane. The protein resides in the extracellular exosome. The protein localises to the cytoplasmic vesicle. Its subcellular location is the secretory vesicle lumen. It is found in the phagocytic cup. Plays important roles in the innate immune response as effector of glucocorticoid-mediated responses and regulator of the inflammatory process. Has anti-inflammatory activity. Plays a role in glucocorticoid-mediated down-regulation of the early phase of the inflammatory response. Contributes to the adaptive immune response by enhancing signaling cascades that are triggered by T-cell activation, regulates differentiation and proliferation of activated T-cells. Promotes the differentiation of T-cells into Th1 cells and negatively regulates differentiation into Th2 cells. Has no effect on unstimulated T-cells. Negatively regulates hormone exocytosis via activation of the formyl peptide receptors and reorganization of the actin cytoskeleton. Has high affinity for Ca(2+) and can bind up to eight Ca(2+) ions. Displays Ca(2+)-dependent binding to phospholipid membranes. Plays a role in the formation of phagocytic cups and phagosomes. Plays a role in phagocytosis by mediating the Ca(2+)-dependent interaction between phagosomes and the actin cytoskeleton. Functionally, functions at least in part by activating the formyl peptide receptors and downstream signaling cascades. Promotes chemotaxis of granulocytes and monocytes via activation of the formyl peptide receptors. Promotes rearrangement of the actin cytoskeleton, cell polarization and cell migration. Promotes resolution of inflammation and wound healing. Acts via neutrophil N-formyl peptide receptors to enhance the release of CXCL2. This Rattus norvegicus (Rat) protein is Annexin A1 (Anxa1).